Reading from the N-terminus, the 145-residue chain is D-aminoacyl-tRNA deacylase (145 aa).

Residues 137 to 138 (GP) carry the Gly-cisPro motif, important for rejection of L-amino acids motif.

It belongs to the DTD family. As to quaternary structure, homodimer.

The protein localises to the cytoplasm. It carries out the reaction glycyl-tRNA(Ala) + H2O = tRNA(Ala) + glycine + H(+). It catalyses the reaction a D-aminoacyl-tRNA + H2O = a tRNA + a D-alpha-amino acid + H(+). An aminoacyl-tRNA editing enzyme that deacylates mischarged D-aminoacyl-tRNAs. Also deacylates mischarged glycyl-tRNA(Ala), protecting cells against glycine mischarging by AlaRS. Acts via tRNA-based rather than protein-based catalysis; rejects L-amino acids rather than detecting D-amino acids in the active site. By recycling D-aminoacyl-tRNA to D-amino acids and free tRNA molecules, this enzyme counteracts the toxicity associated with the formation of D-aminoacyl-tRNA entities in vivo and helps enforce protein L-homochirality. The protein is D-aminoacyl-tRNA deacylase of Shewanella baltica (strain OS223).